The primary structure comprises 106 residues: Small ribosomal subunit protein bS18 (106 aa).

Residues 1-32 (MRWMKIMSEDMKQEQSGEGRGGRGGPARPLAS) are disordered. Basic and acidic residues predominate over residues 7–21 (MSEDMKQEQSGEGRG).

This sequence belongs to the bacterial ribosomal protein bS18 family. In terms of assembly, part of the 30S ribosomal subunit. Forms a tight heterodimer with protein bS6.

In terms of biological role, binds as a heterodimer with protein bS6 to the central domain of the 16S rRNA, where it helps stabilize the platform of the 30S subunit. The sequence is that of Small ribosomal subunit protein bS18 from Magnetococcus marinus (strain ATCC BAA-1437 / JCM 17883 / MC-1).